We begin with the raw amino-acid sequence, 20 residues long: Cruzioseptin-15 (20 aa).

As to expression, expressed by the skin glands.

It localises to the secreted. In terms of biological role, has antimicrobial activity. The sequence is that of Cruzioseptin-15 from Cruziohyla calcarifer (Splendid leaf frog).